Here is a 554-residue protein sequence, read N- to C-terminus: DNA ligase B (554 aa).

The active-site N6-AMP-lysine intermediate is the K122.

Belongs to the NAD-dependent DNA ligase family. LigB subfamily.

The catalysed reaction is NAD(+) + (deoxyribonucleotide)n-3'-hydroxyl + 5'-phospho-(deoxyribonucleotide)m = (deoxyribonucleotide)n+m + AMP + beta-nicotinamide D-nucleotide.. Catalyzes the formation of phosphodiester linkages between 5'-phosphoryl and 3'-hydroxyl groups in double-stranded DNA using NAD as a coenzyme and as the energy source for the reaction. The polypeptide is DNA ligase B (Pseudomonas fluorescens (strain SBW25)).